Reading from the N-terminus, the 514-residue chain is Nucleus accumbens-associated protein 1 (514 aa).

Residues Cys-30–Met-94 form the BTB domain. Lys-167 participates in a covalent cross-link: Glycyl lysine isopeptide (Lys-Gly) (interchain with G-Cter in SUMO1); alternate. Lys-167 is covalently cross-linked (Glycyl lysine isopeptide (Lys-Gly) (interchain with G-Cter in SUMO2); alternate). Residue Lys-182 forms a Glycyl lysine isopeptide (Lys-Gly) (interchain with G-Cter in SUMO2) linkage. 2 disordered regions span residues Arg-183–Ala-205 and Pro-242–Thr-279. A Phosphoserine modification is found at Ser-187. Over residues Pro-242–Gly-251 the composition is skewed to polar residues. Residue Ser-245 is modified to Phosphoserine; by PKC. The segment covering Thr-252–Tyr-264 has biased composition (low complexity). Residues Glu-267 to Thr-279 show a composition bias toward acidic residues. Glycyl lysine isopeptide (Lys-Gly) (interchain with G-Cter in SUMO2) cross-links involve residues Lys-304, Lys-438, Lys-466, and Lys-485. Residues Gly-360–Val-457 form the BEN domain. Residues Ser-492 and Ser-496 each carry the phosphoserine modification.

In terms of assembly, homooligomer; mediated by the BTB domain. Interacts with HDAC3 and HDAC4. Interacts (via BTB domain) with CUL3, PSMD7 and RCOR1. As to expression, ubiquitously expressed with higher expression in the brain, kidney and liver, and at lower levels in heart, lung and testes.

It is found in the nucleus. The protein localises to the cytoplasm. Functions as a transcriptional repressor. Seems to function as a transcriptional corepressor in neuronal cells through recruitment of HDAC3 and HDAC4. Contributes to tumor progression, and tumor cell proliferation and survival. This may be mediated at least in part through repressing transcriptional activity of GADD45GIP1. Required for recruiting the proteasome from the nucleus to the cytoplasm and dendritic spines. Involved in the acute behavioral and neurological responses to cocaine and amphetamines. This Mus musculus (Mouse) protein is Nucleus accumbens-associated protein 1 (Nacc1).